The sequence spans 728 residues: NF-kappa-B inhibitor zeta (728 aa).

The disordered stretch occupies residues G45 to R107. Residues S53–E82 are compositionally biased toward low complexity. The span at S83–V96 shows a compositional bias: basic and acidic residues. One can recognise an OCA domain in the interval R107 to N129. Positions K163–R178 match the Nuclear localization signal motif. Polar residues-rich tracts occupy residues P241–D250 and Q268–S288. Positions P241–L334 are disordered. The span at Q303–P315 shows a compositional bias: low complexity. Over residues L316–Y330 the composition is skewed to polar residues. A required for transcriptional activity region spans residues K329–S403. The segment at M414–Y728 is interaction with NFKB1/p50. ANK repeat units follow at residues D453–M482, N489–T518, W522–Q551, D561–P589, V591–A617, S622–F651, and N658–T691.

As to quaternary structure, interacts with NFKB1/p50. Interacts with RELA. Interacts with AKIRIN2. As to expression, expressed in kidney, liver, lung and heart. Expressed at very low levels in skeletal muscle, spleen and brain.

Its subcellular location is the nucleus. Involved in regulation of NF-kappa-B transcription factor complexes. Inhibits NF-kappa-B activity without affecting its nuclear translocation upon stimulation. Inhibits DNA-binding of RELA and NFKB1/p50, and of the NF-kappa-B p65-p50 heterodimer and the NF-kappa-B p50-p50 homodimer. Also seems to activate NF-kappa-B-mediated transcription. In vitro, upon association with NFKB1/p50 has transcriptional activation activity and, together with NFKB1/p50 and RELA, is recruited to LCN2 promoters. Promotes transcription of LCN2 and DEFB4. Is recruited to IL-6 promoters and activates IL-6 but decreases TNF-alpha production in response to LPS. Seems to be involved in the induction of inflammatory genes activated through TLR/IL-1 receptor signaling. Involved in the induction of T helper 17 cells (Th17) differentiation upon recognition of antigen by T cell antigen receptor (TCR). The protein is NF-kappa-B inhibitor zeta (Nfkbiz) of Mus musculus (Mouse).